The following is a 118-amino-acid chain: Vesicle-associated membrane protein 1 (118 aa).

The segment covering 1–15 (MSAPAQPPAEGTEGA) has biased composition (low complexity). The tract at residues 1-38 (MSAPAQPPAEGTEGAAPGGGPPGPPPNTTSNRRLQQTQ) is disordered. Residues 1-96 (MSAPAQPPAE…KRKYWWKNCK (96 aa)) lie on the Cytoplasmic side of the membrane. Polar residues predominate over residues 28–38 (TTSNRRLQQTQ). One can recognise a v-SNARE coiled-coil homology domain in the interval 33–93 (RLQQTQAQVE…AKLKRKYWWK (61 aa)). The residue at position 63 (serine 63) is a Phosphoserine. The helical; Anchor for type IV membrane protein transmembrane segment at 97–116 (MMIMLGAICAIIVVVIVIYI) threads the bilayer. Residues 117-118 (FT) are Vesicular-facing.

This sequence belongs to the synaptobrevin family. Interacts with VAPA and VAPB. (Microbial infection) Targeted and hydrolyzed by C.botulinum neurotoxin type D (BoNT/D, botD) which hydrolyzes the 61-Lys-|-Leu-62 bond and inhibits neurotransmitter release. This is a poor substrate for BoNT/D, high concentrations are required to cleave it in vitro. In terms of processing, (Microbial infection) Targeted and hydrolyzed by C.botulinum neurotoxin type F (BoNT/F, botF) which hydrolyzes the 60-Gln-|-Lys-61 bond and inhibits neurotransmitter release. Expressed in brain and spleen (at protein level). Isoform 1 expressed at very high level in brain. Even higher level found in spinal cord. Isoform 3 expressed in kidney, spleen and liver. Isoforms 2 and 3 expressed in osteoblasts of trabecular bone. Also expressed in heart.

The protein localises to the cytoplasmic vesicle. The protein resides in the secretory vesicle. It localises to the synaptic vesicle membrane. It is found in the synapse. Its subcellular location is the synaptosome. The protein localises to the cytoplasmic vesicle membrane. The protein resides in the mitochondrion outer membrane. Functionally, involved in the targeting and/or fusion of transport vesicles to their target membrane. This Rattus norvegicus (Rat) protein is Vesicle-associated membrane protein 1 (Vamp1).